The primary structure comprises 253 residues: GTP cyclohydrolase III 2 (253 aa).

Residues 102–125 (LRDAGSAQDENRQEALSHRSPPGF) are disordered.

It belongs to the archaeal-type GTP cyclohydrolase family.

It carries out the reaction GTP + 3 H2O = 2-amino-5-formylamino-6-(5-phospho-D-ribosylamino)pyrimidin-4(3H)-one + 2 phosphate + 2 H(+). Its function is as follows. Catalyzes the formation of 2-amino-5-formylamino-6-ribofuranosylamino-4(3H)-pyrimidinone ribonucleotide monophosphate and inorganic phosphate from GTP. Also has an independent pyrophosphate phosphohydrolase activity. The protein is GTP cyclohydrolase III 2 (gch32) of Halobacterium salinarum (strain ATCC 700922 / JCM 11081 / NRC-1) (Halobacterium halobium).